A 318-amino-acid polypeptide reads, in one-letter code: MANTLEQFKSITTIVADTGDIEAIKRYQPQDATTNPSLILKAAQIPEYKHLIANAIEWAKAQSDDLAQQVEDAGDKLAVNIGLEILKIVPGRISTEVDARLSFDKAGSIEKAHKLIKLYEEAGIDKSRILIKLASTWEGICAAKELEKEGINCNLTLLFCFAQARACAEAGVYLISPFVGRILDWYKKDTGLEYSAAEDPGVVSVTNIYNYYKRHGYKTVVMGASFRNTGEIIELAGCDRLTIGPALLEEMANSDTPVVQKLQAANEVVAPGAALSEAEFRWEFNQDAMAVEKLAEGIRNFAIDQGKLETMLKAELEA.

Lysine 132 acts as the Schiff-base intermediate with substrate in catalysis.

It belongs to the transaldolase family. Type 1 subfamily. Homodimer.

The protein resides in the cytoplasm. It carries out the reaction D-sedoheptulose 7-phosphate + D-glyceraldehyde 3-phosphate = D-erythrose 4-phosphate + beta-D-fructose 6-phosphate. It participates in carbohydrate degradation; pentose phosphate pathway; D-glyceraldehyde 3-phosphate and beta-D-fructose 6-phosphate from D-ribose 5-phosphate and D-xylulose 5-phosphate (non-oxidative stage): step 2/3. Transaldolase is important for the balance of metabolites in the pentose-phosphate pathway. The sequence is that of Transaldolase from Shewanella loihica (strain ATCC BAA-1088 / PV-4).